Consider the following 196-residue polypeptide: RNA-free ribonuclease P (196 aa).

This sequence belongs to the HARP family.

It carries out the reaction Endonucleolytic cleavage of RNA, removing 5'-extranucleotides from tRNA precursor.. RNA-free RNase P that catalyzes the removal of the 5'-leader sequence from pre-tRNA to produce the mature 5'-terminus. In Thermodesulfovibrio yellowstonii (strain ATCC 51303 / DSM 11347 / YP87), this protein is RNA-free ribonuclease P.